Consider the following 343-residue polypeptide: 4-hydroxy-2-oxovalerate aldolase (343 aa).

Positions 4-254 (PRLTDTTLRD…NPGLDVFGLM (251 aa)) constitute a Pyruvate carboxyltransferase domain. 12–13 (RD) provides a ligand contact to substrate. Residue Asp-13 coordinates Mn(2+). The active-site Proton acceptor is the His-16. Positions 166 and 193 each coordinate substrate. Mn(2+) contacts are provided by His-193 and His-195. Tyr-284 lines the substrate pocket.

It belongs to the 4-hydroxy-2-oxovalerate aldolase family.

It carries out the reaction (S)-4-hydroxy-2-oxopentanoate = acetaldehyde + pyruvate. In Chloroflexus aggregans (strain MD-66 / DSM 9485), this protein is 4-hydroxy-2-oxovalerate aldolase.